Reading from the N-terminus, the 2248-residue chain is Zinc finger protein lin-13 (2248 aa).

The segment at 1–189 (MDEFELFQQL…TYASQYSRPP (189 aa)) is disordered. Polar residues predominate over residues 29–38 (QQANNNQSAP). Positions 54–92 (KQREEEEAQRLADFMQKDMKEPAVKRKRGSEEYKKDPLE) are enriched in basic and acidic residues. The segment covering 145–155 (ELDENYMEENE) has biased composition (acidic residues). Residues 440-444 (PLVPV) carry the Required for interaction with hpl-2 isoform a motif. Residues 503-525 (HTCIKCGKTFGTEFMLKHHAQSH) form a C2H2-type 1 zinc finger. Residues 603 to 665 (KTKKENRNIT…FTSSKQKKKR (63 aa)) are disordered. A compositionally biased stretch (basic and acidic residues) spans 605 to 620 (KKENRNITDSNEKEFS). 6 C2H2-type zinc fingers span residues 812–837 (VRCI…SDVH), 959–982 (YSCS…TRFH), 1140–1162 (LMCY…MDDH), 1556–1578 (FKCQ…MRDH), 1601–1623 (WLCR…MAIH), and 1657–1680 (YSCG…SVAH). Over residues 1859–1877 (PRSSLQTNGSSMGSVTTNG) the composition is skewed to polar residues. Positions 1859–1900 (PRSSLQTNGSSMGSVTTNGGRVVRPSPPNSMNVTLRRAPPQQ) are disordered.

As to quaternary structure, interacts (via PLVPV motif) with chromobox protein homolog hpl-2 (via chromo (shadow subtype) domain); the interaction is direct and influences localization of hpl-2 to nuclear foci. In the L3 stage, expressed in syncytial hypodermal cell 7, body wall muscles, intestinal cells, distal tip cells and many neurons.

The protein localises to the nucleus. Its function is as follows. Involved in repression of vulval fate, possibly by a tumor suppressor protein Rb-mediated mechanism. May act in a common pathway with retinoblastoma-like protein homolog lin-35 and hpl-2 to influence the ER stress response in the intestine. Plays a role in recruiting chromobox protein homolog hpl-2 to specific chromatin sites. The polypeptide is Zinc finger protein lin-13 (lin-13) (Caenorhabditis elegans).